Reading from the N-terminus, the 396-residue chain is ATP-dependent RNA helicase eIF4A (396 aa).

Positions 22–50 (YSFDDLNLKPNIVRGIFGYGYESPSAIQQ) match the Q motif motif. The Helicase ATP-binding domain maps to 53-223 (ILPITEGRDV…TKFMNNPVRI (171 aa)). 66-73 (AQSGTGKT) contacts ATP. The short motif at 171 to 174 (DEAD) is the DEAD box element. The 162-residue stretch at 234 to 395 (GIKQFYINVE…EMPANIGELF (162 aa)) folds into the Helicase C-terminal domain.

Belongs to the DEAD box helicase family. eIF4A subfamily. As to quaternary structure, component of the eIF4F complex, which composition varies with external and internal environmental conditions. It is composed of at least eIF4A, eIF4E and eIF4G.

It localises to the cytoplasm. The enzyme catalyses ATP + H2O = ADP + phosphate + H(+). In terms of biological role, ATP-dependent RNA helicase which is a subunit of the eIF4F complex involved in cap recognition and is required for mRNA binding to ribosome. In the current model of translation initiation, eIF4A unwinds RNA secondary structures in the 5'-UTR of mRNAs which is necessary to allow efficient binding of the small ribosomal subunit, and subsequent scanning for the initiator codon. This Meyerozyma guilliermondii (strain ATCC 6260 / CBS 566 / DSM 6381 / JCM 1539 / NBRC 10279 / NRRL Y-324) (Yeast) protein is ATP-dependent RNA helicase eIF4A (TIF1).